Here is a 106-residue protein sequence, read N- to C-terminus: Large ribosomal subunit protein bL21 (106 aa).

This sequence belongs to the bacterial ribosomal protein bL21 family. In terms of assembly, part of the 50S ribosomal subunit. Contacts protein L20.

Its function is as follows. This protein binds to 23S rRNA in the presence of protein L20. This is Large ribosomal subunit protein bL21 from Coprothermobacter proteolyticus (strain ATCC 35245 / DSM 5265 / OCM 4 / BT).